Consider the following 309-residue polypeptide: Aspartate carbamoyltransferase catalytic subunit (309 aa).

Carbamoyl phosphate-binding residues include Arg48 and Thr49. Lys76 contributes to the L-aspartate binding site. The carbamoyl phosphate site is built by Arg98, His128, and Gln131. L-aspartate-binding residues include Arg161 and Arg211. Positions 250 and 251 each coordinate carbamoyl phosphate.

The protein belongs to the aspartate/ornithine carbamoyltransferase superfamily. ATCase family. As to quaternary structure, heterododecamer (2C3:3R2) of six catalytic PyrB chains organized as two trimers (C3), and six regulatory PyrI chains organized as three dimers (R2).

It carries out the reaction carbamoyl phosphate + L-aspartate = N-carbamoyl-L-aspartate + phosphate + H(+). The protein operates within pyrimidine metabolism; UMP biosynthesis via de novo pathway; (S)-dihydroorotate from bicarbonate: step 2/3. Catalyzes the condensation of carbamoyl phosphate and aspartate to form carbamoyl aspartate and inorganic phosphate, the committed step in the de novo pyrimidine nucleotide biosynthesis pathway. This Oceanobacillus iheyensis (strain DSM 14371 / CIP 107618 / JCM 11309 / KCTC 3954 / HTE831) protein is Aspartate carbamoyltransferase catalytic subunit.